Reading from the N-terminus, the 49-residue chain is U-theraphotoxin-Lk2a (49 aa).

Intrachain disulfides connect cysteine 4/cysteine 17, cysteine 8/cysteine 41, cysteine 22/cysteine 24, and cysteine 35/cysteine 46.

The protein belongs to the neurotoxin 12 (Hwtx-2) family. 04 (lasiotoxin) subfamily. Expressed by the venom gland.

It is found in the secreted. In terms of biological role, toxin that causes irreversible contractile paralysis into adult Aedes aegypti resulting in 100% mortality after 24 hours. This Lasiodora klugi (Bahia scarlet tarantula) protein is U-theraphotoxin-Lk2a.